A 160-amino-acid chain; its full sequence is Lipoprotein signal peptidase (160 aa).

The next 2 membrane-spanning stretches (helical) occupy residues 63–83 and 89–109; these read YRLP…AVTF and DQHL…GNLI. Catalysis depends on residues D119 and D137. A helical membrane pass occupies residues 132-152; that stretch reads AFNVADSAICVGVALLAVDMI.

The protein belongs to the peptidase A8 family.

It localises to the cell inner membrane. The enzyme catalyses Release of signal peptides from bacterial membrane prolipoproteins. Hydrolyzes -Xaa-Yaa-Zaa-|-(S,diacylglyceryl)Cys-, in which Xaa is hydrophobic (preferably Leu), and Yaa (Ala or Ser) and Zaa (Gly or Ala) have small, neutral side chains.. It functions in the pathway protein modification; lipoprotein biosynthesis (signal peptide cleavage). This protein specifically catalyzes the removal of signal peptides from prolipoproteins. The sequence is that of Lipoprotein signal peptidase from Geobacter sulfurreducens (strain ATCC 51573 / DSM 12127 / PCA).